The sequence spans 547 residues: MDDSRVQLWVKTDPFLLGALQIPPPEKFSMHYLRKMATYVRTRASEGCYPRLCWCMWRHIACGKLQILEETAWLYFETFLSVFERSVAESLNWAEVASTCPSSEKYEEVKSKLSVDTLKFMLFLYIQQINKISLRSPLIGNEWPSPRGRSPISDFAAQSSFYNKVWDDYSHYNFIHNHLTYILELLMEPNQLSKVSQFSHCILISAEVVTALGFVIEGTVDKNRVVNAFLDLAIWQPVQIKSGFIETLGSFSFQKLQAWIKECLVINPFGITSCIKSGTKLSWAQQVDGLNKRAKVACNTYKVPHTHRMVVMSQISKQTLAKSSKTLVDARVKIHRCSDCYIYLLSPLRSVTVEKCQNCTIVLGPVQTVLHIQMCYNVKIIAVCQRLSLLSTTNCTFHVLTPTRPLFYCGNQGVVLAPFHISYSMLEDHMAHTGLATVPNSWDRPFFFSTESSNSHIWRLLLPEEFFTFVVPFEMEGDTTEIPGGLPPAYSTSVQQRQQKIRMWQETVKDAGLTREQRKQLQAVVEMKFNEWLIKTENRHQLDSLVS.

The region spanning 304-435 (PHTHRMVVMS…LEDHMAHTGL (132 aa)) is the C-CAP/cofactor C-like domain.

This sequence belongs to the TBCC family.

The protein localises to the cytoplasm. It localises to the cytoskeleton. The protein resides in the microtubule organizing center. It is found in the centrosome. Its subcellular location is the spindle pole. Its function is as follows. May play a role in the regulation of centrosome and Golgi apparatus positioning. The chain is TBCC domain-containing protein 1 (tbccd1) from Xenopus tropicalis (Western clawed frog).